The primary structure comprises 198 residues: Recombination protein RecR (198 aa).

The C4-type zinc-finger motif lies at 57–72; the sequence is CSICGRLTDDDPCSIC. A Toprim domain is found at 80-175; the sequence is TTILVLEDSR…KVTRLARGLA (96 aa).

The protein belongs to the RecR family.

In terms of biological role, may play a role in DNA repair. It seems to be involved in an RecBC-independent recombinational process of DNA repair. It may act with RecF and RecO. The protein is Recombination protein RecR of Streptococcus pneumoniae serotype 2 (strain D39 / NCTC 7466).